The primary structure comprises 387 residues: Putative purine permease 15 (387 aa).

The next 10 membrane-spanning stretches (helical) occupy residues 44–64, 84–104, 122–142, 150–169, 179–199, 210–230, 252–272, 306–326, 329–349, and 354–374; these read WVTI…ARLL, TLLQ…HFLI, LAIT…FSDV, VFTL…SKYY, FISL…FSAG, YGII…LCII, FVVV…ILVA, VAWQ…SAVF, VISV…YNTH, and VFRG…IYII.

Belongs to the purine permeases (TC 2.A.7.14) family.

It localises to the membrane. In Arabidopsis thaliana (Mouse-ear cress), this protein is Putative purine permease 15 (PUP15).